Here is a 165-residue protein sequence, read N- to C-terminus: Large ribosomal subunit protein uL10 (165 aa).

The protein belongs to the universal ribosomal protein uL10 family. Part of the ribosomal stalk of the 50S ribosomal subunit. The N-terminus interacts with L11 and the large rRNA to form the base of the stalk. The C-terminus forms an elongated spine to which L12 dimers bind in a sequential fashion forming a multimeric L10(L12)X complex.

In terms of biological role, forms part of the ribosomal stalk, playing a central role in the interaction of the ribosome with GTP-bound translation factors. The polypeptide is Large ribosomal subunit protein uL10 (Deinococcus deserti (strain DSM 17065 / CIP 109153 / LMG 22923 / VCD115)).